The sequence spans 298 residues: uncharacterized protein (298 aa).

Residues 2-229 (LTIDHVTKTF…FGKKNVTIHS (228 aa)) form the ABC transporter domain. ATP is bound at residue 34 to 41 (GANGAGKT).

Belongs to the ABC transporter superfamily.

Its subcellular location is the cell membrane. This is an uncharacterized protein from Bacillus subtilis (strain 168).